The chain runs to 161 residues: Large ribosomal subunit protein bL21m (161 aa).

A mitochondrion-targeting transit peptide spans 1-35 (MLQLKFIWPVARITPIYRPFTSHPFRNLATSSSIS).

It belongs to the bacterial ribosomal protein bL21 family. In terms of assembly, component of the mitochondrial large ribosomal subunit (mt-LSU). Mature yeast 74S mitochondrial ribosomes consist of a small (37S) and a large (54S) subunit. The 37S small subunit contains a 15S ribosomal RNA (15S mt-rRNA) and 34 different proteins. The 54S large subunit contains a 21S rRNA (21S mt-rRNA) and 46 different proteins.

The protein localises to the mitochondrion. Functionally, component of the mitochondrial ribosome (mitoribosome), a dedicated translation machinery responsible for the synthesis of mitochondrial genome-encoded proteins, including at least some of the essential transmembrane subunits of the mitochondrial respiratory chain. The mitoribosomes are attached to the mitochondrial inner membrane and translation products are cotranslationally integrated into the membrane. The protein is Large ribosomal subunit protein bL21m (MRPL49) of Saccharomyces cerevisiae (strain ATCC 204508 / S288c) (Baker's yeast).